The sequence spans 344 residues: Phosphoribosylformylglycinamidine cyclo-ligase (344 aa).

The protein belongs to the AIR synthase family.

The protein localises to the cytoplasm. The enzyme catalyses 2-formamido-N(1)-(5-O-phospho-beta-D-ribosyl)acetamidine + ATP = 5-amino-1-(5-phospho-beta-D-ribosyl)imidazole + ADP + phosphate + H(+). It participates in purine metabolism; IMP biosynthesis via de novo pathway; 5-amino-1-(5-phospho-D-ribosyl)imidazole from N(2)-formyl-N(1)-(5-phospho-D-ribosyl)glycinamide: step 2/2. The sequence is that of Phosphoribosylformylglycinamidine cyclo-ligase from Haemophilus influenzae (strain PittGG).